A 194-amino-acid chain; its full sequence is Flagellar transcriptional regulator FlhC (194 aa).

4 residues coordinate Zn(2+): Cys139, Cys142, Cys159, and Cys162.

This sequence belongs to the FlhC family. As to quaternary structure, heterohexamer composed of two FlhC and four FlhD subunits. Each FlhC binds a FlhD dimer, forming a heterotrimer, and a hexamer assembles by dimerization of two heterotrimers. Zn(2+) serves as cofactor.

The protein resides in the cytoplasm. Functionally, functions in complex with FlhD as a master transcriptional regulator that regulates transcription of several flagellar and non-flagellar operons by binding to their promoter region. Activates expression of class 2 flagellar genes, including fliA, which is a flagellum-specific sigma factor that turns on the class 3 genes. Also regulates genes whose products function in a variety of physiological pathways. The sequence is that of Flagellar transcriptional regulator FlhC from Xenorhabdus nematophila (Achromobacter nematophilus).